The following is a 363-amino-acid chain: Beta-1,3-N-acetylglucosaminyltransferase lunatic fringe (363 aa).

Over Met1–Lys8 the chain is Cytoplasmic. A helical; Signal-anchor for type II membrane protein transmembrane segment spans residues Leu9–Pro29. The Lumenal segment spans residues Gly30–Tyr363. Residue Arg113 participates in substrate binding. Asn151 carries N-linked (GlcNAc...) asparagine glycosylation. 2 disulfide bridges follow: Cys152–Cys163 and Cys181–Cys244. Asp185 contacts substrate. Asp186 contributes to the Mn(2+) binding site. The active site involves Asp274. Mn(2+) is bound at residue His298. A disulfide bridge connects residues Cys348 and Cys357.

Belongs to the glycosyltransferase 31 family. Requires Mn(2+) as cofactor. Co(2+) is required as a cofactor. A soluble form may be derived from the membrane form by proteolytic processing.

The protein resides in the golgi apparatus membrane. It carries out the reaction 3-O-(alpha-L-fucosyl)-L-threonyl-[EGF-like domain protein] + UDP-N-acetyl-alpha-D-glucosamine = 3-O-(N-acetyl-beta-D-glucosaminyl-(1-&gt;3)-alpha-L-fucosyl)-L-threonyl-[EGF-like domain protein] + UDP + H(+). The catalysed reaction is 3-O-(alpha-L-fucosyl)-L-seryl-[EGF-like domain protein] + UDP-N-acetyl-alpha-D-glucosamine = 3-O-(N-acetyl-beta-D-glucosaminyl-(1-&gt;3)-alpha-L-fucosyl)-L-seryl-[EGF-like domain protein] + UDP + H(+). Glycosyltransferase that initiates the elongation of O-linked fucose residues attached to EGF-like repeats in the extracellular domain of Notch molecules. Essential mediator of somite segmentation and patterning. This Gallus gallus (Chicken) protein is Beta-1,3-N-acetylglucosaminyltransferase lunatic fringe (LFNG).